The primary structure comprises 86 residues: RNA-binding protein Hfq (86 aa).

Residues 9 to 69 (DRFLNILRTS…VSTIMPESFV (61 aa)) enclose the Sm domain.

This sequence belongs to the Hfq family. Homohexamer.

Functionally, RNA chaperone that binds small regulatory RNA (sRNAs) and mRNAs to facilitate mRNA translational regulation in response to envelope stress, environmental stress and changes in metabolite concentrations. Also binds with high specificity to tRNAs. The sequence is that of RNA-binding protein Hfq from Thermosipho melanesiensis (strain DSM 12029 / CIP 104789 / BI429).